A 67-amino-acid polypeptide reads, in one-letter code: Small, acid-soluble spore protein B (67 aa).

This sequence belongs to the alpha/beta-type SASP family.

Functionally, SASP are bound to spore DNA. They are double-stranded DNA-binding proteins that cause DNA to change to an a-like conformation. They protect the DNA backbone from chemical and enzymatic cleavage and are thus involved in dormant spore's high resistance to UV light. This is Small, acid-soluble spore protein B (sspB) from Bacillus subtilis (strain 168).